The chain runs to 1166 residues: Calcium-activated potassium channel subunit alpha-1 (1166 aa).

A compositionally biased stretch (gly residues) spans 1-15 (MANGGGGGGGGGGGS). 2 disordered regions span residues 1 to 20 (MANG…LRMS) and 30 to 51 (LDAS…SVHE). At 1 to 74 (MANGGGGGGG…VPCDSRGQRM (74 aa)) the chain is on the extracellular side. Low complexity predominate over residues 33 to 48 (SSSSSSSSSSSSSSSS). The helical transmembrane segment at 75–95 (WWAFLASSMVTFFGGLFIILL) threads the bilayer. Topologically, residues 96-166 (WRTLKYLWTV…MISAQTLTGR (71 aa)) are cytoplasmic. Residues C106, C107, and C109 are each lipidated (S-palmitoyl cysteine). Residue T139 is modified to Phosphothreonine; by CamK2. The helical transmembrane segment at 167–187 (VLVVLVFALSIGALVIYFIDS) threads the bilayer. Over 188–202 (SNPIESCQNFYKDFT) the chain is Extracellular. Residues 203–223 (LQIDMAFNVFFLLYFGLRFIA) form a helical membrane-spanning segment. Residues 224 to 227 (ANDK) lie on the Cytoplasmic side of the membrane. Residues 228–248 (LWFWLEVNSVVDFFTVPPVFV) form a helical membrane-spanning segment. Over 249 to 252 (SVYL) the chain is Extracellular. Residues 253 to 273 (NRSWLGLRFLRALRLIQFSEI) traverse the membrane as a helical; Voltage-sensor segment. Over 274–288 (LQFLNILKTSNSIKL) the chain is Cytoplasmic. Residues 289 to 309 (VNLLSIFISTWLTAAGFIHLV) form a helical membrane-spanning segment. Residues 310-323 (ENSGDPWENFQNNQ) are Extracellular-facing. Positions 324-346 (ALTYWECVYLLMVTMSTVGYGDV) form an intramembrane region, pore-forming. Residues 340–343 (TVGY) carry the Selectivity for potassium motif. At 347–355 (YAKTTLGRL) the chain is on the extracellular side. A helical transmembrane segment spans residues 356 to 376 (FMVFFILGGLAMFASYVPEII). Topologically, residues 377–1166 (ELIGNRKKYG…KQKYVQEERL (790 aa)) are cytoplasmic. Positions 395–537 (RKHIVVCGHI…WNWKEGDDAI (143 aa)) constitute an RCK N-terminal 1 domain. Positions 427, 450, and 452 each coordinate Mg(2+). The tract at residues 544-564 (LGFIAQSCLAQGLSTMLANLF) is segment S7. The segment at 601–621 (LSFPTVCELCFVKLKLLMIAI) is segment S8. The tract at residues 665–669 (CKACH) is heme-binding motif. A disordered region spans residues 689-717 (EQPSTLSPKKKQRNGGMRNSPSSSPKLMR). T693 carries the post-translational modification Phosphothreonine. A phosphoserine mark is found at S695, S708, and S712. A segment S9 region spans residues 767 to 787 (VLSGHVVVCIFGDVSSALIGL). Positions 769 to 913 (SGHVVVCIFG…MDRSSPDNSP (145 aa)) constitute an RCK N-terminal 2 domain. The residue at position 900 (T900) is a Phosphothreonine. 2 positions are modified to phosphoserine: S908 and S912. Positions 933–955 (TELVNDTNVQFLDQDDDDDPDTE) match the Calcium bowl motif. Ca(2+)-binding residues include Q942, D945, D948, and D950. The tract at residues 962–982 (FACGTAFAVSVLDSLMSATYF) is segment S10. Residues 1116-1141 (RASLSHSSHSSQSSSKKSSSVHSIPS) show a composition bias toward low complexity. Residues 1116 to 1166 (RASLSHSSHSSQSSSKKSSSVHSIPSTANRQNRPKSRESRDKQKYVQEERL) form a disordered region. Over residues 1150–1166 (KSRESRDKQKYVQEERL) the composition is skewed to basic and acidic residues. Phosphoserine; by PKG occurs at positions 1151 and 1154.

It belongs to the potassium channel family. Calcium-activated (TC 1.A.1.3) subfamily. KCa1.1/KCNMA1 sub-subfamily. Homotetramer; which constitutes the calcium-activated potassium channel. Interacts with beta subunits KCNMB1, KCNMB2, KCNMB3 and KCNMB4. Interacts with gamma subunits LRRC26, LRRC38, LRRC52 and LRRC55. Beta and gamma subunits are accessory, and modulate its activity. Interacts with RAB11B. Phosphorylated. Stimulated by PKG, but not by PKA. In smooth muscles, phosphorylation affects its activity. In terms of processing, phosphorylated. Exclusively stimulated by PKA. In smooth muscles, phosphorylation affects its activity. Post-translationally, incremental phosphorylation of Thr-139 of the KCNMA1 tetramer changes the response to ethanol from increased activation to inhibition of channel activity. Palmitoylation by ZDHHC22 and ZDHHC23 within the intracellular linker between the S0 and S1 transmembrane domains regulates localization to the plasma membrane. Depalmitoylated by LYPLA1 and LYPLAL1, leading to retard exit from the trans-Golgi network.

It is found in the cell membrane. It carries out the reaction K(+)(in) = K(+)(out). With respect to regulation, ethanol and carbon monoxide-bound heme increase channel activation. Heme inhibits channel activation. Phosphorylation of Thr-139 leads to inhibition of channel activity by ethanol. In terms of biological role, potassium channel activated by both membrane depolarization or increase in cytosolic Ca(2+) that mediates export of K(+). It is also activated by concentration of cytosolic Mg(2+). Its activation dampens the excitatory events that elevate the cytosolic Ca(2+) concentration and/or depolarize the cell membrane. It therefore contributes to repolarization of the membrane potential. Plays a key role in controlling excitability in a number of systems, such as regulation of the contraction of smooth muscle, the tuning of hair cells in the cochlea, regulation of transmitter release, and innate immunity. In smooth muscles, its activation by high level of Ca(2+), caused by ryanodine receptors in the sarcoplasmic reticulum, regulates the membrane potential. In cochlea cells, its number and kinetic properties partly determine the characteristic frequency of each hair cell and thereby helps to establish a tonotopic map. Kinetics of KCNMA1 channels are determined by alternative splicing, phosphorylation status and its combination with modulating beta subunits. Highly sensitive to both iberiotoxin (IbTx) and charybdotoxin (CTX). This is Calcium-activated potassium channel subunit alpha-1 (KCNMA1) from Bos taurus (Bovine).